A 290-amino-acid chain; its full sequence is Protease HtpX (290 aa).

Helical transmembrane passes span 4 to 24 and 36 to 56; these read IFLFLATNLAVLVIASITLKL and GSLLVFCAVFGFAGSLISLFI. A Zn(2+)-binding site is contributed by H142. E143 is a catalytic residue. H146 lines the Zn(2+) pocket. Helical transmembrane passes span 150–170 and 193–213; these read GDMVTLALIQGVVNTFVMFFA and FVATIFAELVLGILASIIVMW. A Zn(2+)-binding site is contributed by E219.

The protein belongs to the peptidase M48B family. Zn(2+) serves as cofactor.

The protein localises to the cell inner membrane. In Stutzerimonas stutzeri (strain A1501) (Pseudomonas stutzeri), this protein is Protease HtpX.